The following is a 371-amino-acid chain: Aspartate-semialdehyde dehydrogenase (371 aa).

Residues 9-12, 37-38, and glutamine 73 contribute to the NADP(+) site; these read RGMV and TS. Arginine 102 is a phosphate binding site. Cysteine 135 functions as the Acyl-thioester intermediate in the catalytic mechanism. Glutamine 162 is a substrate binding site. NADP(+) contacts are provided by residues 165–166 and proline 193; that span reads SG. Residue glutamate 241 coordinates substrate. Lysine 244 contacts phosphate. Arginine 268 provides a ligand contact to substrate. Residue histidine 275 is the Proton acceptor of the active site. NADP(+) is bound at residue glutamine 351.

Belongs to the aspartate-semialdehyde dehydrogenase family. Homodimer.

It catalyses the reaction L-aspartate 4-semialdehyde + phosphate + NADP(+) = 4-phospho-L-aspartate + NADPH + H(+). It participates in amino-acid biosynthesis; L-lysine biosynthesis via DAP pathway; (S)-tetrahydrodipicolinate from L-aspartate: step 2/4. It functions in the pathway amino-acid biosynthesis; L-methionine biosynthesis via de novo pathway; L-homoserine from L-aspartate: step 2/3. The protein operates within amino-acid biosynthesis; L-threonine biosynthesis; L-threonine from L-aspartate: step 2/5. In terms of biological role, catalyzes the NADPH-dependent formation of L-aspartate-semialdehyde (L-ASA) by the reductive dephosphorylation of L-aspartyl-4-phosphate. The protein is Aspartate-semialdehyde dehydrogenase of Neisseria meningitidis serogroup B (strain ATCC BAA-335 / MC58).